We begin with the raw amino-acid sequence, 202 residues long: Dephospho-CoA kinase (202 aa).

The DPCK domain occupies 5–202 (IVGLTGGIAS…DADYRARSDR (198 aa)). 13-18 (ASGKSA) is an ATP binding site.

It belongs to the CoaE family.

The protein localises to the cytoplasm. It catalyses the reaction 3'-dephospho-CoA + ATP = ADP + CoA + H(+). It participates in cofactor biosynthesis; coenzyme A biosynthesis; CoA from (R)-pantothenate: step 5/5. Functionally, catalyzes the phosphorylation of the 3'-hydroxyl group of dephosphocoenzyme A to form coenzyme A. This chain is Dephospho-CoA kinase, found in Xanthomonas oryzae pv. oryzae (strain MAFF 311018).